The primary structure comprises 97 residues: Eotaxin (97 aa).

Residues 1–23 form the signal peptide; that stretch reads MQLSTALLFLLLTATSFTSQVLA. Disulfide bonds link C32-C57 and C33-C73. Residue T94 is glycosylated (O-linked (GalNAc...) threonine).

The protein belongs to the intercrine beta (chemokine CC) family.

The protein resides in the secreted. In terms of biological role, in response to the presence of allergens, this protein directly promotes the accumulation of eosinophils (a prominent feature of allergic inflammatory reactions), but not lymphocytes, macrophages or neutrophils. Binds to CCR3. The sequence is that of Eotaxin (Ccl11) from Rattus norvegicus (Rat).